A 363-amino-acid polypeptide reads, in one-letter code: Ribosome-binding ATPase YchF (363 aa).

The 255-residue stretch at 3 to 257 (FKCGFVGLPN…VSAYDHLSLK (255 aa)) folds into the OBG-type G domain. Residue 12-17 (NVGKST) participates in ATP binding. Positions 16 and 36 each coordinate Mg(2+). The TGS domain maps to 278–361 (NLITFFTAGK…CDGDIIHVLY (84 aa)).

The protein belongs to the TRAFAC class OBG-HflX-like GTPase superfamily. OBG GTPase family. YchF/OLA1 subfamily. It depends on Mg(2+) as a cofactor.

Its function is as follows. ATPase that binds to both the 70S ribosome and the 50S ribosomal subunit in a nucleotide-independent manner. This Buchnera aphidicola subsp. Baizongia pistaciae (strain Bp) protein is Ribosome-binding ATPase YchF.